Consider the following 104-residue polypeptide: Cell division protein FtsL (104 aa).

The Cytoplasmic portion of the chain corresponds to 1-20 (MSKPSLTLPRIVLHDLWQHK). A helical membrane pass occupies residues 21–43 (WILLLALLVLSNAVAVVYTSHVS). The Periplasmic segment spans residues 44–104 (RKLTTEWDQL…PSEEIVVKVP (61 aa)).

It belongs to the FtsL family. In terms of assembly, part of a complex composed of FtsB, FtsL and FtsQ.

It localises to the cell inner membrane. Essential cell division protein. May link together the upstream cell division proteins, which are predominantly cytoplasmic, with the downstream cell division proteins, which are predominantly periplasmic. This is Cell division protein FtsL from Shewanella oneidensis (strain ATCC 700550 / JCM 31522 / CIP 106686 / LMG 19005 / NCIMB 14063 / MR-1).